Reading from the N-terminus, the 141-residue chain is Large ribosomal subunit protein uL11 (141 aa).

This sequence belongs to the universal ribosomal protein uL11 family. Part of the ribosomal stalk of the 50S ribosomal subunit. Interacts with L10 and the large rRNA to form the base of the stalk. L10 forms an elongated spine to which L12 dimers bind in a sequential fashion forming a multimeric L10(L12)X complex. One or more lysine residues are methylated.

Its function is as follows. Forms part of the ribosomal stalk which helps the ribosome interact with GTP-bound translation factors. In Microcystis aeruginosa (strain NIES-843 / IAM M-2473), this protein is Large ribosomal subunit protein uL11.